The chain runs to 500 residues: Metal transporter Nramp3.1 (500 aa).

The next 12 helical transmembrane spans lie at 51–71, 79–99, 128–148, 160–180, 188–208, 234–254, 280–300, 322–342, 370–390, 401–421, 439–459, and 467–487; these read LWLF…PGNL, AIAG…GLLV, MILW…EVIG, VLPL…FLFL, LEAA…WMFA, AVGV…SALV, AALA…AKGF, YGGG…AAGQ, ALIT…VFDT, WLNM…LCLV, VSWL…LDFF, and VFTT…IYLI.

This sequence belongs to the NRAMP (TC 2.A.55) family. In terms of tissue distribution, expressed in roots, stems, buds and leaves.

The protein resides in the golgi apparatus. The protein localises to the trans-Golgi network membrane. The enzyme catalyses Mn(2+)(in) = Mn(2+)(out). The catalysed reaction is Fe(2+)(in) = Fe(2+)(out). Its function is as follows. Divalent metal transporter. Can transport manganese (Mn) and iron (Fe). Involved in the control of cell-to-cell transport of manganese (Mn) between organs and tissues to monitor Mn homeostasis. The chain is Metal transporter Nramp3.1 from Populus trichocarpa (Western balsam poplar).